The following is a 249-amino-acid chain: ATP synthase subunit a, chloroplastic (249 aa).

5 helical membrane-spanning segments follow: residues 38–58, 97–117, 136–156, 201–221, and 222–242; these read GQVLITSWVVMAIIIITSVIA, VPFVGTLFLFIFISNWSGALI, INTTVALALLTSVAYFYAGLS, LVVAVLISLVPLVIPVPMMLL, and GLFTSGIQALIFATLAAAYIG.

Belongs to the ATPase A chain family. F-type ATPases have 2 components, CF(1) - the catalytic core - and CF(0) - the membrane proton channel. CF(1) has five subunits: alpha(3), beta(3), gamma(1), delta(1), epsilon(1). CF(0) has four main subunits: a, b, b' and c.

It is found in the plastid. Its subcellular location is the chloroplast thylakoid membrane. Key component of the proton channel; it plays a direct role in the translocation of protons across the membrane. The chain is ATP synthase subunit a, chloroplastic from Chlorokybus atmophyticus (Soil alga).